A 273-amino-acid chain; its full sequence is Putative phosphoenolpyruvate synthase regulatory protein (273 aa).

Position 153–160 (153–160 (AVSRAGKT)) interacts with ADP.

The protein belongs to the pyruvate, phosphate/water dikinase regulatory protein family. PSRP subfamily.

It catalyses the reaction [pyruvate, water dikinase] + ADP = [pyruvate, water dikinase]-phosphate + AMP + H(+). It carries out the reaction [pyruvate, water dikinase]-phosphate + phosphate + H(+) = [pyruvate, water dikinase] + diphosphate. Functionally, bifunctional serine/threonine kinase and phosphorylase involved in the regulation of the phosphoenolpyruvate synthase (PEPS) by catalyzing its phosphorylation/dephosphorylation. This is Putative phosphoenolpyruvate synthase regulatory protein from Xylella fastidiosa (strain M23).